Reading from the N-terminus, the 376-residue chain is Galactoside alpha-(1,2)-fucosyltransferase 1 (376 aa).

Residues 1–12 (MWTPSRKQLCLA) lie on the Cytoplasmic side of the membrane. Residues 13 to 29 (FLSVCVLSAGSFFFHLN) traverse the membrane as a helical; Signal-anchor for type II membrane protein segment. Topologically, residues 30 to 376 (GGNFFQNALT…WETDSLFRLA (347 aa)) are lumenal. 3 N-linked (GlcNAc...) asparagine glycosylation sites follow: Asn-64, Asn-302, and Asn-328.

Belongs to the glycosyltransferase 11 family.

The protein resides in the golgi apparatus. Its subcellular location is the golgi stack membrane. The enzyme catalyses a beta-D-galactosyl-(1-&gt;4)-N-acetyl-beta-D-glucosaminyl derivative + GDP-beta-L-fucose = an alpha-L-Fuc-(1-&gt;2)-beta-D-Gal-(1-&gt;4)-beta-D-GlcNAc derivative + GDP + H(+). The catalysed reaction is a ganglioside GA1 + GDP-beta-L-fucose = a ganglioside Fuc-GA1 + GDP + H(+). It catalyses the reaction a beta-D-Gal-(1-&gt;3)-beta-D-GlcNAc-(1-&gt;3)-beta-D-Gal-(1-&gt;4)-beta-D-Glc-(1&lt;-&gt;1')-Cer(d18:1(4E)) + GDP-beta-L-fucose = alpha-L-fucosyl-(1-&gt;2)- beta-D-galactosyl-(1-&gt;3)-N-acetyl-beta-D-glucosaminyl-(1-&gt;3)-beta-D-galactosyl-(1-&gt;4)-beta-D-glucosyl-(1&lt;-&gt;1')-N-acylsphing-4-enine + GDP + H(+). It carries out the reaction a neolactoside nLc4Cer(d18:1(4E)) + GDP-beta-L-fucose = a neolactoside IV(2)-alpha-Fuc-nLc4Cer(d18:1(4E)) + GDP + H(+). The enzyme catalyses a ganglioside GM1 + GDP-beta-L-fucose = a ganglioside Fuc-GM1 + GDP + H(+). The catalysed reaction is beta-D-galactosyl-(1-&gt;3)-N-acetyl-D-galactosamine + GDP-beta-L-fucose = alpha-L-fucosyl-(1-&gt;2)-beta-D-galactosyl-(1-&gt;3)-N-acetyl-D-galactosamine + GDP + H(+). It functions in the pathway protein modification; protein glycosylation. Functionally, catalyzes the transfer of L-fucose, from a guanosine diphosphate-beta-L-fucose, to the terminal galactose residue of glycoconjugates through an alpha(1,2) linkage leading to H antigen synthesis that is an intermediate substrate in the synthesis of ABO blood group antigens. H antigen is essential for maturation of the glomerular layer of the main olfactory bulb, in cell migration and early cell-cell contacts during tumor associated angiogenesis. Preferentially fucosylates soluble lactose and to a lesser extent fucosylates glycolipids gangliosides GA1 and GM1a. The polypeptide is Galactoside alpha-(1,2)-fucosyltransferase 1 (Rattus norvegicus (Rat)).